The following is an 834-amino-acid chain: Probable glucan 1,3-beta-glucosidase D (834 aa).

The span at 1–33 (MPSHSRSRDRYGGRDSDREARYDYDYARRRYAT) shows a compositional bias: basic and acidic residues. 2 disordered regions span residues 1–188 (MPSH…ASHL) and 200–251 (QYEK…TKAR). At 1-306 (MPSHSRSRDR…GGRPFWKRKK (306 aa)) the chain is on the cytoplasmic side. The span at 34-45 (DDNDDDYDDDEL) shows a compositional bias: acidic residues. Basic and acidic residues-rich tracts occupy residues 46–76 (EHGL…RDAE), 98–173 (YGHD…ETAA), 201–218 (YEKE…AAKA), and 228–245 (VVGE…ESHR). The helical; Signal-anchor for type II membrane protein transmembrane segment at 307-327 (WIGLGALILILVIVIPVAVVV) threads the bilayer. Topologically, residues 328-834 (SKKHDNKSDP…PDFGNLPEYY (507 aa)) are extracellular. The interval 331–354 (HDNKSDPADPQGTSPGKSNLDGLS) is disordered. 7 N-linked (GlcNAc...) asparagine glycosylation sites follow: asparagine 333, asparagine 379, asparagine 384, asparagine 396, asparagine 549, asparagine 561, and asparagine 570. Glutamate 600 serves as the catalytic Proton donor. N-linked (GlcNAc...) asparagine glycosylation is found at asparagine 639, asparagine 672, and asparagine 692. Residue glutamate 705 is the Nucleophile of the active site.

It belongs to the glycosyl hydrolase 5 (cellulase A) family.

It localises to the cell membrane. The catalysed reaction is Successive hydrolysis of beta-D-glucose units from the non-reducing ends of (1-&gt;3)-beta-D-glucans, releasing alpha-glucose.. Its function is as follows. Glucosidase involved in the degradation of cellulosic biomass. Active on lichenan. The chain is Probable glucan 1,3-beta-glucosidase D (exgD) from Neosartorya fischeri (strain ATCC 1020 / DSM 3700 / CBS 544.65 / FGSC A1164 / JCM 1740 / NRRL 181 / WB 181) (Aspergillus fischerianus).